Reading from the N-terminus, the 557-residue chain is Formate--tetrahydrofolate ligase (557 aa).

Threonine 65–threonine 72 contacts ATP.

Belongs to the formate--tetrahydrofolate ligase family.

It carries out the reaction (6S)-5,6,7,8-tetrahydrofolate + formate + ATP = (6R)-10-formyltetrahydrofolate + ADP + phosphate. It functions in the pathway one-carbon metabolism; tetrahydrofolate interconversion. This chain is Formate--tetrahydrofolate ligase, found in Acidiphilium cryptum (strain JF-5).